Here is a 406-residue protein sequence, read N- to C-terminus: MQEGIEVRVQEAMREIARGVNEIIGIEYIQSLVERYYKSGETFSIKAGFDPTAPDLHLGHTVLIQKMATFQKHGAIVTFLIGDYTAMIGDPTGKSETRKPLTREQVLQNAQSYQDQVFKILDPQKTVIRFNSEWLEKLGTAGMIELTAKFSVARMLERDDFEKRYKSQTPISLVEFIYPLLQGYDSVALESDVEFGGTDQKFNLLMGRHLQRSYGLKKEQSVLMVPILEGLDGVQKMSKSLGNYIGVTEEPNTMYAKVLSVSDELMWRYYELLSAKSLDEIHKLQEDVKSGNYHPKKAKEDLALEITTRYHSEQDALQAKEEFDKVFARDEIPSEMPELGVTGEIWICKAMVEGGISPSTSQARRDIQAGSVKINQTKVEDINQQLGHGEHIIQVGKRKFLRLIVK.

The 'HIGH' region motif lies at 51–60 (PTAPDLHLGH). The 'KMSKS' region signature appears at 236 to 240 (KMSKS). Residue Lys-239 coordinates ATP. One can recognise an S4 RNA-binding domain in the interval 345–405 (IWICKAMVEG…GKRKFLRLIV (61 aa)).

Belongs to the class-I aminoacyl-tRNA synthetase family. TyrS type 2 subfamily. In terms of assembly, homodimer.

Its subcellular location is the cytoplasm. It carries out the reaction tRNA(Tyr) + L-tyrosine + ATP = L-tyrosyl-tRNA(Tyr) + AMP + diphosphate + H(+). Catalyzes the attachment of tyrosine to tRNA(Tyr) in a two-step reaction: tyrosine is first activated by ATP to form Tyr-AMP and then transferred to the acceptor end of tRNA(Tyr). The protein is Tyrosine--tRNA ligase of Wolinella succinogenes (strain ATCC 29543 / DSM 1740 / CCUG 13145 / JCM 31913 / LMG 7466 / NCTC 11488 / FDC 602W) (Vibrio succinogenes).